The chain runs to 68 residues: DNA-directed RNA polymerase subunit omega (68 aa).

It belongs to the RNA polymerase subunit omega family. The RNAP catalytic core consists of 2 alpha, 1 beta, 1 beta' and 1 omega subunit. When a sigma factor is associated with the core the holoenzyme is formed, which can initiate transcription.

The enzyme catalyses RNA(n) + a ribonucleoside 5'-triphosphate = RNA(n+1) + diphosphate. Its function is as follows. Promotes RNA polymerase assembly. Latches the N- and C-terminal regions of the beta' subunit thereby facilitating its interaction with the beta and alpha subunits. This is DNA-directed RNA polymerase subunit omega from Chromobacterium violaceum (strain ATCC 12472 / DSM 30191 / JCM 1249 / CCUG 213 / NBRC 12614 / NCIMB 9131 / NCTC 9757 / MK).